The primary structure comprises 362 residues: Bifunctional nitrilase/nitrile hydratase NIT4 (362 aa).

The CN hydrolase domain maps to 31–307; the sequence is VRATVVQAST…EALITADLDL (277 aa). Glu71 functions as the Proton acceptor in the catalytic mechanism. Lys162 functions as the Proton donor in the catalytic mechanism. Cys196 (nucleophile) is an active-site residue.

The protein belongs to the carbon-nitrogen hydrolase superfamily. Nitrilase family.

It carries out the reaction a nitrile + 2 H2O = a carboxylate + NH4(+). The catalysed reaction is 3-cyano-L-alanine + 2 H2O = L-aspartate + NH4(+). In terms of biological role, highly specific for beta-cyano-L-alanine (Ala(CN)). Low activity with 3-phenylpropionitrile (PPN). Not associated with auxin production but may be involved in cyanide detoxification. This Oryza sativa subsp. japonica (Rice) protein is Bifunctional nitrilase/nitrile hydratase NIT4 (NIT4).